The primary structure comprises 252 residues: O-methyltransferase hkm8 (252 aa).

S-adenosyl-L-methionine-binding positions include Glu-73, 75–76 (GT), Ser-81, and Asp-100.

The protein belongs to the class I-like SAM-binding methyltransferase superfamily. Cation-dependent O-methyltransferase family.

It participates in secondary metabolite biosynthesis. Its function is as follows. O-methyltransferase; part of the gene cluster that mediates the biosynthesis of hancockiamides, an unusual new family of N-cinnamoylated piperazines. The NRPS hkm10 and the NmrA-like reductase hkm9 are proposed to convert two molecules of L-Phe to the intermediary piperazine called xenocockiamide A. Xenocockiamide A is then converted to hancockiamide D via a series of hydroxylations and O-methylations. The tyrosinase hkm6 may catalyze an aromatic hydroxylation, then the 2-oxoglutarate-dependent Fe(II) dioxygenase hkm4 and the FAD-dependent phenol hydroxylase hkm7 may catalyze consecutive hydroxylations to install 2 more hydroxy groups, and the methyltransferase hkm8 probably catalyzes two methylations using 2 molecules of S-adenosyl-L-methionine (SAM). The NRPS hkm11 activates and transfers trans-cinnamate supplied by the PAL hkm12 to hancockiamide D and produces hancockiamide A. NRPS Hkm11 has the flexibility to tolerate the bulky hancockiamide G as a substrate and the absence of the acetyl-transferase hkm3 opens up the opportunity for hkm11 to introduce a second N-cinnamoyl moiety. The cytochrome P450 monooxygenase hkm5 catalyzes the methylenedioxy bridge formation, converting hancockiamide A into hancockiamide G. Hkm5 can also convert hancockiamide B into hancockiamide C, and hancockiamide D into hancockiamide H. The N-acetyltransferase hkm3 finally transfers an acetyl group to 1-N of piperazine, converting hancockiamide A into hancockiamide B and hancockiamide G into hancockiamide C. This is O-methyltransferase hkm8 from Aspergillus hancockii.